Reading from the N-terminus, the 1509-residue chain is DNA-directed RNA polymerase subunit beta' (1509 aa).

Residues Cys75, Cys77, Cys90, and Cys93 each coordinate Zn(2+). Residues Asp474, Asp476, and Asp478 each coordinate Mg(2+). Positions 804, 878, 885, and 888 each coordinate Zn(2+).

This sequence belongs to the RNA polymerase beta' chain family. The RNAP catalytic core consists of 2 alpha, 1 beta, 1 beta' and 1 omega subunit. When a sigma factor is associated with the core the holoenzyme is formed, which can initiate transcription. Mg(2+) serves as cofactor. The cofactor is Zn(2+).

It catalyses the reaction RNA(n) + a ribonucleoside 5'-triphosphate = RNA(n+1) + diphosphate. Its function is as follows. DNA-dependent RNA polymerase catalyzes the transcription of DNA into RNA using the four ribonucleoside triphosphates as substrates. The protein is DNA-directed RNA polymerase subunit beta' of Sulfurovum sp. (strain NBC37-1).